The primary structure comprises 349 residues: tRNA N6-adenosine threonylcarbamoyltransferase (349 aa).

Fe cation is bound by residues His-117 and His-121. Residues 140–144 (LVSGG), Asp-173, Gly-186, and Asn-284 contribute to the substrate site. Position 312 (Asp-312) interacts with Fe cation.

This sequence belongs to the KAE1 / TsaD family. Requires Fe(2+) as cofactor.

Its subcellular location is the cytoplasm. It catalyses the reaction L-threonylcarbamoyladenylate + adenosine(37) in tRNA = N(6)-L-threonylcarbamoyladenosine(37) in tRNA + AMP + H(+). In terms of biological role, required for the formation of a threonylcarbamoyl group on adenosine at position 37 (t(6)A37) in tRNAs that read codons beginning with adenine. Is involved in the transfer of the threonylcarbamoyl moiety of threonylcarbamoyl-AMP (TC-AMP) to the N6 group of A37, together with TsaE and TsaB. TsaD likely plays a direct catalytic role in this reaction. In Psychrobacter arcticus (strain DSM 17307 / VKM B-2377 / 273-4), this protein is tRNA N6-adenosine threonylcarbamoyltransferase.